Here is a 175-residue protein sequence, read N- to C-terminus: General odorant-binding protein 84a (175 aa).

A signal peptide spans 1–24 (MYSALVRACAVIAFLILSPNCARA). Disulfide bonds link C103–C151 and C140–C160.

In terms of tissue distribution, present only in a small number of hairs scattered over the surface of the funiculus.

It localises to the secreted. This chain is General odorant-binding protein 84a (Obp84a), found in Drosophila melanogaster (Fruit fly).